A 98-amino-acid polypeptide reads, in one-letter code: uncharacterized protein (98 aa).

The STAS domain occupies 1 to 85 (MLETVPVRCV…GTLKQALENM (85 aa)).

Post-translationally, phosphorylated on threonine residue(s). Phosphorylated by PrkC and dephosphorylated by PrpC.

The protein localises to the cytoplasm. This is an uncharacterized protein from Bacillus subtilis (strain 168).